We begin with the raw amino-acid sequence, 280 residues long: Ribosomal RNA small subunit methyltransferase A (280 aa).

6 residues coordinate S-adenosyl-L-methionine: Asn27, Leu29, Gly54, Glu76, Asp102, and Asn122.

This sequence belongs to the class I-like SAM-binding methyltransferase superfamily. rRNA adenine N(6)-methyltransferase family. RsmA subfamily.

Its subcellular location is the cytoplasm. The enzyme catalyses adenosine(1518)/adenosine(1519) in 16S rRNA + 4 S-adenosyl-L-methionine = N(6)-dimethyladenosine(1518)/N(6)-dimethyladenosine(1519) in 16S rRNA + 4 S-adenosyl-L-homocysteine + 4 H(+). Functionally, specifically dimethylates two adjacent adenosines (A1518 and A1519) in the loop of a conserved hairpin near the 3'-end of 16S rRNA in the 30S particle. May play a critical role in biogenesis of 30S subunits. The chain is Ribosomal RNA small subunit methyltransferase A from Oleidesulfovibrio alaskensis (strain ATCC BAA-1058 / DSM 17464 / G20) (Desulfovibrio alaskensis).